The following is a 481-amino-acid chain: Probable glycine dehydrogenase (decarboxylating) subunit 2 (481 aa).

The segment at 1–26 (MVIFEKTRGKNSPSVMPSKKGDVSNI) is disordered. The residue at position 263 (lysine 263) is an N6-(pyridoxal phosphate)lysine.

Belongs to the GcvP family. C-terminal subunit subfamily. In terms of assembly, the glycine cleavage system is composed of four proteins: P, T, L and H. In this organism, the P 'protein' is a heterodimer of two subunits. The cofactor is pyridoxal 5'-phosphate.

It carries out the reaction N(6)-[(R)-lipoyl]-L-lysyl-[glycine-cleavage complex H protein] + glycine + H(+) = N(6)-[(R)-S(8)-aminomethyldihydrolipoyl]-L-lysyl-[glycine-cleavage complex H protein] + CO2. In terms of biological role, the glycine cleavage system catalyzes the degradation of glycine. The P protein binds the alpha-amino group of glycine through its pyridoxal phosphate cofactor; CO(2) is released and the remaining methylamine moiety is then transferred to the lipoamide cofactor of the H protein. This Francisella tularensis subsp. mediasiatica (strain FSC147) protein is Probable glycine dehydrogenase (decarboxylating) subunit 2.